The following is a 165-amino-acid chain: Probable DNA polymerase III subunit chi (165 aa).

This sequence belongs to the DNA polymerase III chi/HolC chain family. In terms of assembly, DNA polymerase III contains a core (composed of alpha, epsilon and theta chains) that associates with a tau subunit. This core dimerizes to form the POLIII' complex. PolIII' associates with the gamma complex (composed of gamma, delta, delta', psi and chi chains) and with the beta chain to form the complete DNA polymerase III complex. Interacts directly with the psi subunit (holD). The only subunit of the DNA polymerase III holoenzyme known to interact with single-stranded DNA binding protein (SSB).

The catalysed reaction is DNA(n) + a 2'-deoxyribonucleoside 5'-triphosphate = DNA(n+1) + diphosphate. Functionally, part of the beta sliding clamp loading complex, which hydrolyzes ATP to load the beta clamp onto primed DNA to form the DNA replication pre-initiation complex. DNA polymerase III is a complex, multichain enzyme responsible for most of the replicative synthesis in bacteria. This DNA polymerase also exhibits 3' to 5' exonuclease activity. The polypeptide is Probable DNA polymerase III subunit chi (Rickettsia prowazekii (strain Madrid E)).